We begin with the raw amino-acid sequence, 447 residues long: MCDVVNEIELARARCENKTAGNVTSGCKGMWDIIACWPSAKVGEHVVIPCPNYFRHFSDHHEGNLSKTCTADGWTEMDPMEIAVYCGYNLNGTVDDDSFFRSVKIGYTIGHSVSLISLTTAIVILCMSRKLHCTRNYIHMHLFVSFILKAIAVFVKDAVLYDVIQESDNCSTASVGCKAVIVFFQYCIMASFFWLLVEGLYLHALLAVSFFSERKYFWWYILIGWGGPTIFIMAWSFAKAYFNDVGCWDIIENSDLFWWIIKTPILASILMNFILFICIIRILRQKINCPDIGRNESNQYSRLAKSTLLLIPLFGINFIIFAFIPENIKTELRLVFDLILGSFQGFVVAVLYCFLNGEVQAEIKRKWRRWHLERFLGPDTKYQHPSMGSNGNNFSTQISMLTRCSPKTRRASTCQDETSITVLGSTTMGYGHQNETVKGHEDVREVS.

Residues 1-103 (MCDVVNEIEL…VDDDSFFRSV (103 aa)) lie on the Extracellular side of the membrane. Cystine bridges form between cysteine 15-cysteine 36, cysteine 27-cysteine 69, and cysteine 50-cysteine 86. Asparagine 17, asparagine 22, asparagine 64, and asparagine 91 each carry an N-linked (GlcNAc...) asparagine glycan. Residues 104-128 (KIGYTIGHSVSLISLTTAIVILCMS) traverse the membrane as a helical segment. The Cytoplasmic portion of the chain corresponds to 129 to 135 (RKLHCTR). A helical transmembrane segment spans residues 136 to 155 (NYIHMHLFVSFILKAIAVFV). The Extracellular portion of the chain corresponds to 156 to 178 (KDAVLYDVIQESDNCSTASVGCK). A glycan (N-linked (GlcNAc...) asparagine) is linked at asparagine 169. A disulfide bridge connects residues cysteine 177 and cysteine 247. A helical transmembrane segment spans residues 179-202 (AVIVFFQYCIMASFFWLLVEGLYL). The Cytoplasmic segment spans residues 203–216 (HALLAVSFFSERKY). Residues 217 to 238 (FWWYILIGWGGPTIFIMAWSFA) form a helical membrane-spanning segment. The Extracellular portion of the chain corresponds to 239–256 (KAYFNDVGCWDIIENSDL). The chain crosses the membrane as a helical span at residues 257-280 (FWWIIKTPILASILMNFILFICII). Residues 281-305 (RILRQKINCPDIGRNESNQYSRLAK) lie on the Cytoplasmic side of the membrane. The chain crosses the membrane as a helical span at residues 306–325 (STLLLIPLFGINFIIFAFIP). The Extracellular segment spans residues 326–337 (ENIKTELRLVFD). A helical transmembrane segment spans residues 338 to 357 (LILGSFQGFVVAVLYCFLNG). Topologically, residues 358-447 (EVQAEIKRKW…KGHEDVREVS (90 aa)) are cytoplasmic.

It belongs to the G-protein coupled receptor 2 family.

It localises to the cell membrane. In terms of biological role, this is a receptor for VIP. The activity of this receptor is mediated by G proteins which activate adenylyl cyclase. This chain is Vasoactive intestinal polypeptide receptor (vipr1), found in Carassius auratus (Goldfish).